Here is a 365-residue protein sequence, read N- to C-terminus: MNTQTPTVLDLVRQELRNFAGYSSARSVALTGDLWLNANESAWPNPADSHATMRRYPEPQPPKLRQMLAALYGCVPEQLLIGRGSDEGIDLLVRAVCEPGCDPVLVTPPVFGMYAVSAQLQNAPVIQVPLVDDAAGFHADVPAIITAAQTSRAKLVFLCSPSNPVGAAIPLQQIETILQTLAGTALVVVDEAYGEFSDVPSVVPLLARYPHLVVLRTLSKAHALAAVRIGSVIADAHLVAILRRCQAPYPLPTPCVSLAEQGLSAAALQVTAQRVAEIRAERERLGAALACLSGVRRVYPSQGNFLLVRFDDAEAALQALYAAGVVVRDQRAAPQLHDALRLTVGTPEQNTRLLAVLRDIQAVPA.

An N6-(pyridoxal phosphate)lysine modification is found at lysine 220.

The protein belongs to the class-II pyridoxal-phosphate-dependent aminotransferase family. Histidinol-phosphate aminotransferase subfamily. In terms of assembly, homodimer. The cofactor is pyridoxal 5'-phosphate.

The enzyme catalyses L-histidinol phosphate + 2-oxoglutarate = 3-(imidazol-4-yl)-2-oxopropyl phosphate + L-glutamate. It functions in the pathway amino-acid biosynthesis; L-histidine biosynthesis; L-histidine from 5-phospho-alpha-D-ribose 1-diphosphate: step 7/9. In Xylella fastidiosa (strain 9a5c), this protein is Histidinol-phosphate aminotransferase.